Reading from the N-terminus, the 235-residue chain is Cytochrome c-554 (235 aa).

The first 24 residues, 1 to 24, serve as a signal peptide directing secretion; it reads MKIMIACGLVAAALFTLTSGQSLA. Positions 35, 38, 39, 51, 84, 87, 88, 112, 115, 116, 126, 158, 161, 162, and 203 each coordinate heme. The segment at 121 to 144 is disordered; sequence NFRGDHRKSGQAFEKSGKKTPRKD.

Binds 4 heme groups per subunit.

It is found in the periplasm. Functionally, involved in ammonia oxidation; accepts electrons directly from hydroxylamine oxidoreductase (HAO). The sequence is that of Cytochrome c-554 (cycA1) from Nitrosomonas europaea (strain ATCC 19718 / CIP 103999 / KCTC 2705 / NBRC 14298).